The following is a 396-amino-acid chain: Elongation factor Tu (396 aa).

Positions 10 to 205 (KPHVNIGTIG…ACDDSIPDPE (196 aa)) constitute a tr-type G domain. Positions 19 to 26 (GHVDHGKT) are G1. A GTP-binding site is contributed by 19–26 (GHVDHGKT). Thr-26 serves as a coordination point for Mg(2+). A G2 region spans residues 62–66 (GITIN). Positions 83-86 (DAPG) are G3. GTP-binding positions include 83 to 87 (DAPGH) and 138 to 141 (NKCD). The interval 138-141 (NKCD) is G4. Residues 175–177 (SAL) form a G5 region.

It belongs to the TRAFAC class translation factor GTPase superfamily. Classic translation factor GTPase family. EF-Tu/EF-1A subfamily. As to quaternary structure, monomer.

It is found in the cytoplasm. It carries out the reaction GTP + H2O = GDP + phosphate + H(+). Functionally, GTP hydrolase that promotes the GTP-dependent binding of aminoacyl-tRNA to the A-site of ribosomes during protein biosynthesis. The protein is Elongation factor Tu of Corynebacterium diphtheriae (strain ATCC 700971 / NCTC 13129 / Biotype gravis).